Reading from the N-terminus, the 355-residue chain is 3-isopropylmalate dehydrogenase (355 aa).

Arg-90, Arg-100, Arg-128, and Asp-222 together coordinate substrate. Residues Asp-222, Asp-246, and Asp-250 each contribute to the Mg(2+) site. 280-292 (GSAPDIAGKGIAN) is an NAD(+) binding site.

The protein belongs to the isocitrate and isopropylmalate dehydrogenases family. LeuB type 1 subfamily. Homodimer. Requires Mg(2+) as cofactor. The cofactor is Mn(2+).

The protein resides in the cytoplasm. It carries out the reaction (2R,3S)-3-isopropylmalate + NAD(+) = 4-methyl-2-oxopentanoate + CO2 + NADH. It participates in amino-acid biosynthesis; L-leucine biosynthesis; L-leucine from 3-methyl-2-oxobutanoate: step 3/4. Functionally, catalyzes the oxidation of 3-carboxy-2-hydroxy-4-methylpentanoate (3-isopropylmalate) to 3-carboxy-4-methyl-2-oxopentanoate. The product decarboxylates to 4-methyl-2 oxopentanoate. This chain is 3-isopropylmalate dehydrogenase, found in Burkholderia lata (strain ATCC 17760 / DSM 23089 / LMG 22485 / NCIMB 9086 / R18194 / 383).